The chain runs to 443 residues: Phosphoglucosamine mutase (443 aa).

Serine 102 functions as the Phosphoserine intermediate in the catalytic mechanism. 4 residues coordinate Mg(2+): serine 102, aspartate 241, aspartate 243, and aspartate 245. Position 102 is a phosphoserine (serine 102).

This sequence belongs to the phosphohexose mutase family. Mg(2+) is required as a cofactor. In terms of processing, activated by phosphorylation.

The enzyme catalyses alpha-D-glucosamine 1-phosphate = D-glucosamine 6-phosphate. Catalyzes the conversion of glucosamine-6-phosphate to glucosamine-1-phosphate. The chain is Phosphoglucosamine mutase from Polaromonas sp. (strain JS666 / ATCC BAA-500).